The chain runs to 1059 residues: Putative ATP-dependent RNA helicase BoYb (1059 aa).

The Q motif signature appears at 54-82; sequence RRFAEVSLLPDILETMRNLGLNRLLRLQS. Residues 87–284 enclose the Helicase ATP-binding domain; it reads HLAGGSGHGA…RAVNDKPALV (198 aa). 100 to 107 is a binding site for ATP; that stretch reads GSPASGRT. The DEAD box signature appears at 230 to 233; it reads DDVD. Positions 575–639 constitute a Tudor domain; sequence PPVAGAICMY…GKLFECPEAL (65 aa). The segment at 756–787 is disordered; the sequence is VQDSKEKANSKPHEKMKGKMTDQPAKLQSQPP. Basic and acidic residues predominate over residues 757 to 775; it reads QDSKEKANSKPHEKMKGKM.

The protein resides in the cytoplasm. The enzyme catalyses ATP + H2O = ADP + phosphate + H(+). Functionally, involved in primary piRNA biogenesis in germline cells. This Drosophila melanogaster (Fruit fly) protein is Putative ATP-dependent RNA helicase BoYb (BoYb).